Reading from the N-terminus, the 338-residue chain is Ketol-acid reductoisomerase (NADP(+)) (338 aa).

Residues 1-181 (MQVYYDKDAD…GGGRAGVIET (181 aa)) enclose the KARI N-terminal Rossmann domain. Residues 24-27 (YGSQ), Arg47, Ser50, Ser52, and 82-85 (DEHQ) each bind NADP(+). His107 is a catalytic residue. Gly133 lines the NADP(+) pocket. Residues 182–327 (SFREETETDL…ERLRGMMPWI (146 aa)) form the KARI C-terminal knotted domain. The Mg(2+) site is built by Asp190, Glu194, Glu226, and Glu230. Ser251 is a binding site for substrate.

It belongs to the ketol-acid reductoisomerase family. The cofactor is Mg(2+).

The catalysed reaction is (2R)-2,3-dihydroxy-3-methylbutanoate + NADP(+) = (2S)-2-acetolactate + NADPH + H(+). The enzyme catalyses (2R,3R)-2,3-dihydroxy-3-methylpentanoate + NADP(+) = (S)-2-ethyl-2-hydroxy-3-oxobutanoate + NADPH + H(+). The protein operates within amino-acid biosynthesis; L-isoleucine biosynthesis; L-isoleucine from 2-oxobutanoate: step 2/4. It participates in amino-acid biosynthesis; L-valine biosynthesis; L-valine from pyruvate: step 2/4. Involved in the biosynthesis of branched-chain amino acids (BCAA). Catalyzes an alkyl-migration followed by a ketol-acid reduction of (S)-2-acetolactate (S2AL) to yield (R)-2,3-dihydroxy-isovalerate. In the isomerase reaction, S2AL is rearranged via a Mg-dependent methyl migration to produce 3-hydroxy-3-methyl-2-ketobutyrate (HMKB). In the reductase reaction, this 2-ketoacid undergoes a metal-dependent reduction by NADPH to yield (R)-2,3-dihydroxy-isovalerate. The sequence is that of Ketol-acid reductoisomerase (NADP(+)) from Alkalilimnicola ehrlichii (strain ATCC BAA-1101 / DSM 17681 / MLHE-1).